The chain runs to 698 residues: Glycine--tRNA ligase beta subunit (698 aa).

This sequence belongs to the class-II aminoacyl-tRNA synthetase family. As to quaternary structure, tetramer of two alpha and two beta subunits.

It localises to the cytoplasm. The enzyme catalyses tRNA(Gly) + glycine + ATP = glycyl-tRNA(Gly) + AMP + diphosphate. The protein is Glycine--tRNA ligase beta subunit of Xanthomonas campestris pv. campestris (strain B100).